The sequence spans 356 residues: Histidinol-phosphate aminotransferase (356 aa).

Lys214 is subject to N6-(pyridoxal phosphate)lysine.

Belongs to the class-II pyridoxal-phosphate-dependent aminotransferase family. Histidinol-phosphate aminotransferase subfamily. Homodimer. Requires pyridoxal 5'-phosphate as cofactor.

It carries out the reaction L-histidinol phosphate + 2-oxoglutarate = 3-(imidazol-4-yl)-2-oxopropyl phosphate + L-glutamate. It participates in amino-acid biosynthesis; L-histidine biosynthesis; L-histidine from 5-phospho-alpha-D-ribose 1-diphosphate: step 7/9. The chain is Histidinol-phosphate aminotransferase from Escherichia coli (strain 55989 / EAEC).